A 269-amino-acid polypeptide reads, in one-letter code: Formamidopyrimidine-DNA glycosylase (269 aa).

Proline 2 serves as the catalytic Schiff-base intermediate with DNA. Catalysis depends on glutamate 3, which acts as the Proton donor. Lysine 57 functions as the Proton donor; for beta-elimination activity in the catalytic mechanism. DNA is bound by residues histidine 90, arginine 109, and lysine 150. The FPG-type zinc-finger motif lies at 235–269 (QVYGRKGEPCRVCGTPIVATKHAQRATFYCRHCQK). Arginine 259 functions as the Proton donor; for delta-elimination activity in the catalytic mechanism.

It belongs to the FPG family. Monomer. Requires Zn(2+) as cofactor.

It catalyses the reaction Hydrolysis of DNA containing ring-opened 7-methylguanine residues, releasing 2,6-diamino-4-hydroxy-5-(N-methyl)formamidopyrimidine.. The enzyme catalyses 2'-deoxyribonucleotide-(2'-deoxyribose 5'-phosphate)-2'-deoxyribonucleotide-DNA = a 3'-end 2'-deoxyribonucleotide-(2,3-dehydro-2,3-deoxyribose 5'-phosphate)-DNA + a 5'-end 5'-phospho-2'-deoxyribonucleoside-DNA + H(+). Involved in base excision repair of DNA damaged by oxidation or by mutagenic agents. Acts as a DNA glycosylase that recognizes and removes damaged bases. Has a preference for oxidized purines, such as 7,8-dihydro-8-oxoguanine (8-oxoG). Has AP (apurinic/apyrimidinic) lyase activity and introduces nicks in the DNA strand. Cleaves the DNA backbone by beta-delta elimination to generate a single-strand break at the site of the removed base with both 3'- and 5'-phosphates. The polypeptide is Formamidopyrimidine-DNA glycosylase (Salmonella dublin (strain CT_02021853)).